Consider the following 249-residue polypeptide: Methyl-coenzyme M reductase I subunit gamma (249 aa).

Arg120 contacts coenzyme M.

The protein belongs to the methyl-coenzyme M reductase gamma subunit family. As to quaternary structure, MCR is a hexamer of two alpha, two beta, and two gamma chains, forming a dimer of heterotrimers. Requires coenzyme F430 as cofactor.

Its subcellular location is the cytoplasm. It catalyses the reaction coenzyme B + methyl-coenzyme M = methane + coenzyme M-coenzyme B heterodisulfide. The protein operates within one-carbon metabolism; methyl-coenzyme M reduction; methane from methyl-coenzyme M: step 1/1. Its activity is regulated as follows. Methyl-coenzyme M reductase activity is inhibited by 3-nitrooxypropanol (3-NOP) in vitro and in vivo, by oxidation of its active site Ni(I), which stops both growth and methanogenesis. Is also inhibited by the reaction product CoM-S-S-CoB. Component of the methyl-coenzyme M reductase (MCR) I that catalyzes the reductive cleavage of methyl-coenzyme M (CoM-S-CH3 or 2-(methylthio)ethanesulfonate) using coenzyme B (CoB or 7-mercaptoheptanoylthreonine phosphate) as reductant which results in the production of methane and the mixed heterodisulfide of CoB and CoM (CoM-S-S-CoB). This is the final step in methanogenesis. Neither N-6-mercaptohexanoylthreonine phosphate (H-S-HxoTP) nor N-8-mercaptooctanoylthreonine phosphate (H-SOcoTP) nor any other thiol compound such as CoA or CoM can substitute for CoB as the electron donor. In Methanothermobacter marburgensis (strain ATCC BAA-927 / DSM 2133 / JCM 14651 / NBRC 100331 / OCM 82 / Marburg) (Methanobacterium thermoautotrophicum), this protein is Methyl-coenzyme M reductase I subunit gamma (mcrG).